Here is a 199-residue protein sequence, read N- to C-terminus: FMN-dependent NADH:quinone oxidoreductase 2 (199 aa).

FMN-binding positions include serine 10, 16 to 18 (SVS), and 96 to 99 (MYNF).

This sequence belongs to the azoreductase type 1 family. As to quaternary structure, homodimer. FMN serves as cofactor.

It catalyses the reaction 2 a quinone + NADH + H(+) = 2 a 1,4-benzosemiquinone + NAD(+). The catalysed reaction is N,N-dimethyl-1,4-phenylenediamine + anthranilate + 2 NAD(+) = 2-(4-dimethylaminophenyl)diazenylbenzoate + 2 NADH + 2 H(+). Quinone reductase that provides resistance to thiol-specific stress caused by electrophilic quinones. Functionally, also exhibits azoreductase activity. Catalyzes the reductive cleavage of the azo bond in aromatic azo compounds to the corresponding amines. The chain is FMN-dependent NADH:quinone oxidoreductase 2 from Pseudomonas fluorescens (strain ATCC BAA-477 / NRRL B-23932 / Pf-5).